A 136-amino-acid chain; its full sequence is ATP synthase epsilon chain (136 aa).

The interval 88–136 (DASSAESDLQAARNEVSKMEGQPASADKVKAQQSLDRARARVQAAKNQD) is disordered.

The protein belongs to the ATPase epsilon chain family. F-type ATPases have 2 components, CF(1) - the catalytic core - and CF(0) - the membrane proton channel. CF(1) has five subunits: alpha(3), beta(3), gamma(1), delta(1), epsilon(1). CF(0) has three main subunits: a, b and c.

It localises to the cellular thylakoid membrane. In terms of biological role, produces ATP from ADP in the presence of a proton gradient across the membrane. The polypeptide is ATP synthase epsilon chain (Synechococcus sp. (strain WH7803)).